The chain runs to 293 residues: Pyridoxal 5'-phosphate synthase subunit PdxS (293 aa).

Asp23 is a D-ribose 5-phosphate binding site. The Schiff-base intermediate with D-ribose 5-phosphate role is filled by Lys80. D-ribose 5-phosphate is bound at residue Gly152. Arg164 is a binding site for D-glyceraldehyde 3-phosphate. D-ribose 5-phosphate contacts are provided by residues Gly213 and 234-235 (GS).

It belongs to the PdxS/SNZ family. In the presence of PdxT, forms a dodecamer of heterodimers.

It carries out the reaction aldehydo-D-ribose 5-phosphate + D-glyceraldehyde 3-phosphate + L-glutamine = pyridoxal 5'-phosphate + L-glutamate + phosphate + 3 H2O + H(+). It functions in the pathway cofactor biosynthesis; pyridoxal 5'-phosphate biosynthesis. Its function is as follows. Catalyzes the formation of pyridoxal 5'-phosphate from ribose 5-phosphate (RBP), glyceraldehyde 3-phosphate (G3P) and ammonia. The ammonia is provided by the PdxT subunit. Can also use ribulose 5-phosphate and dihydroxyacetone phosphate as substrates, resulting from enzyme-catalyzed isomerization of RBP and G3P, respectively. This chain is Pyridoxal 5'-phosphate synthase subunit PdxS, found in Syntrophus aciditrophicus (strain SB).